A 509-amino-acid chain; its full sequence is Coiled-coil domain-containing protein 181 (509 aa).

Disordered regions lie at residues 27–122 and 287–368; these read INDK…EDEE and LAQV…NEKK. Composition is skewed to basic and acidic residues over residues 41 to 58 and 67 to 82; these read ACKKEDDLDQELKEKETE and DPDKPPKDEALPRRND. Polar residues predominate over residues 319–333; sequence RIQSAGVSPVTSTYC. Coiled-coil stretches lie at residues 335 to 377 and 418 to 488; these read SPRQ…VFKA and LKKK…RSKQ. A compositionally biased stretch (basic and acidic residues) spans 337 to 368; the sequence is RQKELQKQLERKRERLKREEEQRKLEEENEKK.

This sequence belongs to the CCDC181 family. As to quaternary structure, homodimer. Interacts with HOOK1. Interacts with HOOK2. Interacts with HOOK3.

It localises to the cytoplasm. It is found in the cytoskeleton. The protein resides in the cell projection. The protein localises to the cilium. Its subcellular location is the flagellum. Microtubule-binding protein that localizes to the microtubular manchette of elongating spermatids. The sequence is that of Coiled-coil domain-containing protein 181 from Rattus norvegicus (Rat).